Reading from the N-terminus, the 942-residue chain is Leucine--tRNA ligase 1 (942 aa).

Positions 39 to 49 match the 'HIGH' region motif; sequence PYTNSPLHIGH. A 'KMSKS' region motif is present at residues 624 to 628; that stretch reads KMSKS. Lys-627 contributes to the ATP binding site.

The protein belongs to the class-I aminoacyl-tRNA synthetase family.

Its subcellular location is the cytoplasm. The catalysed reaction is tRNA(Leu) + L-leucine + ATP = L-leucyl-tRNA(Leu) + AMP + diphosphate. This chain is Leucine--tRNA ligase 1, found in Sulfolobus acidocaldarius (strain ATCC 33909 / DSM 639 / JCM 8929 / NBRC 15157 / NCIMB 11770).